Reading from the N-terminus, the 996-residue chain is MEAALLSGFIKAILPRLFSLVDDKHKLHKGVKGDIDFLIKELRMIVGAIDDDLSLDHPAAAAVQTLCMEDLRELAHGIEDCIDGVLYRAARDQQQSPVRRAVQAPKKLQRNLQLAQQLQRLKRMAAEANQRKQRYTAAAPGQHGQVYSSAAAQVDEPWPSCSSASDPRIHEADLVGVDADREELLEQLAERQPEQLKVIAIVGFCGLGKTALAAEAYNRETGGGRFERHAWVCAGHRSAREVLGELLRRLDADGRSFHGDSDAGQLCVDIRQQLEKNRYFIVIDDIQTEDQWKSIKSAFPTDKDIGSRIVVTTTIQSVANACCSANGYLHKMSRLDKNCSKQLLSKKACPERYSHYKQPDSAAILKKCDGQPLALVTIGEFLQANGWPTGPNCEDLCNRLHYHLENDKTLERMWRVLVRNYTSLPGHALKACLLYFGMFPSDHPIRRKSLLRRWLAEGFVEPLSSSSNIDSTAAFNVLMDRNIIEPINVSNNDKVKTCQTYGMMREFISHMSISQNFVTFFCDDKFVPKYVRRLSLHGDTVVNGDNFNGIDLSLVRSLAVFGEAGTTVLDFSKYQLLRVLDLEKCDDLKDDHLKEICNLVLLKYLSLGGNISKLPKDIAKLKDLEALDVRRSKVKIMPVEVFGLPCLIHLLGKFKLSDKVKQKTEVQEFLLKGKSNLQTLAGFASNGSEGFLHLMRYMNKLRKLKIWCTSSAGSTDWTDLREAIQQFILDEKEANIGTRSLSLHFSGCSEDAINSLKEPCYLSSLKLHGNFPQLPQFVTSLRGLKELCLSSTKFTTGLLEALSNLSYLQYLKLVADELEKFIIKVQGFPRLLRLCIVLQYPTFPVIEEGALPFLVTLQLLCKDLHGLSDIQIECFKHLQEVTLHSGVTPATRQEWVKAAKEHPNRPKVLLLKSVDTAESEHTDVDSVMEAVKSETTEYSIAPEGPEQVNNKMQLDHGLESSSVLNKQNNFADQSSSKDQLHYSFNNMGLSDVSCCE.

Positions 1 to 176 (MEAALLSGFI…PRIHEADLVG (176 aa)) are structured coiled coil (CC) domain. Positions 111–138 (NLQLAQQLQRLKRMAAEANQRKQRYTAA) form a coiled coil. The NB-ARC domain occupies 180-462 (DREELLEQLA…RWLAEGFVEP (283 aa)). LRR repeat units lie at residues 481–503 (RNII…TYGM), 504–528 (MREF…KFVP), 529–549 (KYVR…NFNG), 577–599 (LRVL…ICNL), 600–621 (VLLK…IAKL), 622–644 (KDLE…VFGL), 698–722 (MNKL…DLRE), 759–781 (PCYL…VTSL), 782–804 (RGLK…ALSN), 805–830 (LSYL…GFPR), and 851–874 (LPFL…QIEC).

The protein belongs to the disease resistance NB-LRR family. Forms homodimer or heterodimer with RGA5 through its coiled coil (CC) domain. In terms of tissue distribution, expressed in leaves.

Its subcellular location is the cytoplasm. Its function is as follows. Disease resistance (R) protein. Resistance proteins guard the plant against pathogens that contain an appropriate avirulence protein via an indirect interaction with this avirulence protein. That triggers a defense system including the hypersensitive response, which restricts the pathogen growth. Contribution of RGA5 is required to recognize the effector avirulence proteins AVR-Pia and AVR1-CO39 from M.oryzae. Acts as a constitutively active cell death inducer that is repressed by RGA5. Immune response triggered by the RGA4-RGA5 -mediated recognition of AVR1-CO39 confers resistance to X.oryzae pathovars. This Oryza sativa subsp. japonica (Rice) protein is Disease resistance protein RGA4.